Reading from the N-terminus, the 1032-residue chain is Calmodulin-binding transcription activator 3 (1032 aa).

Positions 15–141 (VGQILSEARH…YLEVKGSRVS (127 aa)) form a DNA-binding region, CG-1. Residues 146–197 (RMQRTEDAARSPQETGDALTSEHDGYASCSFNQNDHSNHSQTTDSASVNGFH) are disordered. Positions 174-195 (CSFNQNDHSNHSQTTDSASVNG) are enriched in polar residues. Ser-272 is modified (phosphoserine). ANK repeat units follow at residues 661-690 (GGQGVLHFAASLGYNWALEPTIIAGVSVDF), 694-723 (NGWTALHWAAFFGRERIIGSLIALGAAPGT), and 733-762 (SGSTPSDLAYANGHKGIAGYLSEYALRAHV). IQ domains lie at 852–881 (VQAAAIRIQNKFRGYKGRKDYLITRQRIIK) and 875–904 (TRQRIIKIQAHVRGYQFRKNYRKIIWSVGV). Residues 900–922 (WSVGVLEKVILRWRRKGAGLRGF) are calmodulin-binding. Residues 945-987 (KQGRKQTEDRLQKALARVKSMVQYPEARDQYRRLLNVVNDIQE) are a coiled coil. Ser-964 is modified (phosphoserine).

It belongs to the CAMTA family. Interacts with SR1IP1. Interacts with DSC1. Ubiquinated during pathogen infection. Ubiquitination leads to its subsequent proteasome-dependent degradation, thus allowing the establishment of plant defense response. Expressed in roots, stems, leaves, carpels, and siliques, but not in stigmas or other parts of the flower.

It localises to the nucleus. In terms of biological role, transcription activator that binds to the DNA consensus sequence 5'-[ACG]CGCG[GTC]-3'. Binds calmodulin in a calcium-dependent manner in vitro. Regulates transcriptional activity in response to calcium signals. Involved in freezing tolerance in association with CAMTA1 and CAMTA2. Required for the cold-induced expression of DREB1B/CBF1, DREB1C/CBF2, ZAT12 and GOLS3. Involved in response to cold. Contributes together with CAMTA5 to the positive regulation of the cold-induced expression of DREB1A/CBF3, DREB1B/CBF1 and DREB1C/CBF2. Involved together with CAMTA2 and CAMTA4 in the positive regulation of a general stress response (GSR). Involved in the regulation of GSR amplitude downstream of MEKK1. Involved in the regulation of a set of genes involved in defense responses against pathogens. Involved in the regulation of both basal resistance and systemic acquired resistance (SAR). Acts as negative regulator of plant immunity. Binds to the promoter of the defense-related gene EDS1 and represses its expression. Binds to the promoter of the defense-related gene NDR1 and represses its expression. Involved in defense against insects. Required for tolerance to the generalist herbivore Trichoplusia ni, and contributes to the positive regulation of genes associated with glucosinolate metabolism. Required for tolerance to Bradysia impatiens larvae. Mediates herbivore-induced wound response. Required for wound-induced jasmonate accumulation. Involved in the regulation of ethylene-induced senescence by binding to the promoter of the senescence-inducer gene EIN3 and repressing its expression. The polypeptide is Calmodulin-binding transcription activator 3 (Arabidopsis thaliana (Mouse-ear cress)).